A 194-amino-acid chain; its full sequence is MEAFVRETGRAVVIPNDNINTDIILPKQFLKNILKTGFGKDLFFDWRYNADGSLNEAFELNKPAHQGASILITGNDFGSGSSREHAVWALTDYGFRAVIGGGFSDIFYMNSTKNGLLPIVLPEENRKILRGIQADENIQIDLPEQTVTYKNYTFHFDINSQWKEKFINGEDDIDNTMKYEKLIAAFEKQRPNFG.

This sequence belongs to the LeuD family. LeuD type 1 subfamily. In terms of assembly, heterodimer of LeuC and LeuD.

The catalysed reaction is (2R,3S)-3-isopropylmalate = (2S)-2-isopropylmalate. It functions in the pathway amino-acid biosynthesis; L-leucine biosynthesis; L-leucine from 3-methyl-2-oxobutanoate: step 2/4. Its function is as follows. Catalyzes the isomerization between 2-isopropylmalate and 3-isopropylmalate, via the formation of 2-isopropylmaleate. This chain is 3-isopropylmalate dehydratase small subunit, found in Leuconostoc mesenteroides subsp. mesenteroides (strain ATCC 8293 / DSM 20343 / BCRC 11652 / CCM 1803 / JCM 6124 / NCDO 523 / NBRC 100496 / NCIMB 8023 / NCTC 12954 / NRRL B-1118 / 37Y).